Reading from the N-terminus, the 355-residue chain is Phosphatidylinositol:ceramide inositolphosphotransferase (355 aa).

Residues 1-44 (MISYPFFSLSPPGLVPPPMAVPPVEMYSGSFWNRMRKPLPLRTQ) are Cytoplasmic-facing. Residues 45 to 65 (VIRFTVVFVIVSFILAVALQI) form a helical membrane-spanning segment. Topologically, residues 66–89 (THERMPDPKVTKPLPDLGFELLTK) are extracellular. Residues 90 to 110 (ISFLSVVTDVLIAFLSSLSFF) form a helical membrane-spanning segment. Residues 111-165 (TLWKLYLLHRHCVGSGEPELPCNIPGVSRFFLSVWLCKENCRIELRNVHTIAWIR) are Cytoplasmic-facing. A helical membrane pass occupies residues 166-186 (FITSYALLLLFRSLVIVMTSM). Residues 187–205 (PTPVDKCQNPPKIENPVKN) are Extracellular-facing. The chain crosses the membrane as a helical span at residues 206–226 (VILTVLTAGGGSIHCGDLMYS). Over 227 to 251 (GHTVILTLHLMFHWIYGAMVHWSFR) the chain is Cytoplasmic. Active-site residues include H228, H271, and D275. A helical membrane pass occupies residues 252 to 272 (PVVTVVAIFGYYCIVASRSHY). The Extracellular portion of the chain corresponds to 273–275 (TDD). Residues 276-296 (VLVAIYLTIATFIAVGHNADG) form a helical membrane-spanning segment. Topologically, residues 297–355 (APWQLQLFIRWLPCCGANSREVTEDSQPVMVAFKSEAVDELRERDDSAGLSCEVSTNEV) are cytoplasmic.

It belongs to the sphingomyelin synthase family.

It localises to the membrane. In terms of biological role, bidirectional lipid inositolphosphotransferase capable of converting phosphatidylinositol (PI) and ceramide to inositol-phosphorylceramide (IPC) and diacylglycerol (DAG) and vice versa. Direction is dependent on the relative concentrations of DAG and ceramide as phosphoinositol acceptors. Does not function strictly as a SM synthase. Essential for viability of the pathogenic bloodstream stage of this human protozoan parasite and, consequently, can be considered as potential drug target. This is Phosphatidylinositol:ceramide inositolphosphotransferase from Trypanosoma brucei brucei (strain 927/4 GUTat10.1).